A 368-amino-acid chain; its full sequence is Putative phospho-2-dehydro-3-deoxyheptonate aldolase (368 aa).

Belongs to the class-I DAHP synthase family.

The catalysed reaction is D-erythrose 4-phosphate + phosphoenolpyruvate + H2O = 7-phospho-2-dehydro-3-deoxy-D-arabino-heptonate + phosphate. It functions in the pathway metabolic intermediate biosynthesis; chorismate biosynthesis; chorismate from D-erythrose 4-phosphate and phosphoenolpyruvate: step 1/7. Functionally, stereospecific condensation of phosphoenolpyruvate (PEP) and D-erythrose-4-phosphate (E4P) giving rise to 3-deoxy-D-arabino-heptulosonate-7-phosphate (DAHP). The polypeptide is Putative phospho-2-dehydro-3-deoxyheptonate aldolase (Schizosaccharomyces pombe (strain 972 / ATCC 24843) (Fission yeast)).